Here is a 92-residue protein sequence, read N- to C-terminus: Small ribosomal subunit protein uS19c (92 aa).

It belongs to the universal ribosomal protein uS19 family.

It is found in the plastid. The protein localises to the chloroplast. Protein S19 forms a complex with S13 that binds strongly to the 16S ribosomal RNA. This Chaetosphaeridium globosum (Charophycean green alga) protein is Small ribosomal subunit protein uS19c.